Consider the following 278-residue polypeptide: MQIIHTIRELRAWRKNAGKVAFVPTMGNLHEGHLALVREAKKRADSVVVSIFVNRLQFGQGEDFDKYPRTLQQDADKLAAEGIAVVFAPDEKELYPNVEQRYNVEPPNLQNELCGKFRPGHFRGVATVVSKLFHIVSPDIACFGKKDYQQLAVIKGFVEDLNFDVEIVPVDTGRAEDGLALSSRNQYLSAAERDEAPRLYRELKAVAESLVQGSLDYAGLEKRAVQSLTEYGWVVDYVEIRRADTLEVARAGDKKLVVLAAACLGTTRLIDNLEIKLP.

Position 26–33 (26–33) interacts with ATP; that stretch reads MGNLHEGH. H33 serves as the catalytic Proton donor. Q57 lines the (R)-pantoate pocket. Q57 lines the beta-alanine pocket. 144–147 contacts ATP; it reads GKKD. Q150 is a (R)-pantoate binding site. ATP-binding positions include G173 and 181–184; that span reads LSSR.

It belongs to the pantothenate synthetase family. As to quaternary structure, homodimer.

It localises to the cytoplasm. The catalysed reaction is (R)-pantoate + beta-alanine + ATP = (R)-pantothenate + AMP + diphosphate + H(+). It functions in the pathway cofactor biosynthesis; (R)-pantothenate biosynthesis; (R)-pantothenate from (R)-pantoate and beta-alanine: step 1/1. Functionally, catalyzes the condensation of pantoate with beta-alanine in an ATP-dependent reaction via a pantoyl-adenylate intermediate. The chain is Pantothenate synthetase from Neisseria meningitidis serogroup B (strain ATCC BAA-335 / MC58).